A 280-amino-acid polypeptide reads, in one-letter code: Thylakoid lumenal protein TL20.3, chloroplastic (280 aa).

A chloroplast-targeting transit peptide spans 1–59 (MAFSSLSPLPMKSLDISRSSSSVSRSPYHFQRYLLRRLQLSSRSNLEIKDSSNTREGCC). Residues 60 to 90 (SSAESNTWKRILSAAMAAAVIASSSGVPAMA) constitute a thylakoid transit peptide. 2 Pentapeptide repeat domains span residues 124–163 (ENFRRANFTSADMRESDFSGSTFNGAYLEKAVAYKANFSG) and 169–208 (TLMDRMVLNEANLTNAVLVRSVLTRSDLGGAKIEGADFSD).

Interacts with thioredoxin. Interacts in vitro with LTO1.

The protein localises to the plastid. The protein resides in the chloroplast thylakoid lumen. Functionally, pentapeptide repeat protein of unknown function. Subject to degradation when reduced. This Arabidopsis thaliana (Mouse-ear cress) protein is Thylakoid lumenal protein TL20.3, chloroplastic.